A 2038-amino-acid polypeptide reads, in one-letter code: Non-reducing polyketide synthase ZEA1 (2038 aa).

The tract at residues Leu-9–His-246 is N-terminal acylcarrier protein transacylase domain (SAT). The region spanning Pro-364–Asp-794 is the Ketosynthase family 3 (KS3) domain. Active-site for beta-ketoacyl synthase activity residues include Cys-537, His-672, and His-711. Residues Val-888–Leu-1172 are malonyl-CoA:ACP transacylase (MAT) domain. Ser-979 serves as the catalytic For acyl/malonyl transferase activity. Residues Ser-1221–Leu-1572 are product template (PT) domain. The segment at His-1254 to Lys-1405 is N-terminal hotdog fold. The 320-residue stretch at His-1254–Asp-1573 folds into the PKS/mFAS DH domain. Residues Ile-1425 to Asp-1573 form a C-terminal hotdog fold region. Positions Gln-1616–Ser-1693 constitute a Carrier domain. Ser-1653 is modified (O-(pantetheine 4'-phosphoryl)serine). The segment at Asn-1700–Ser-1738 is disordered. Residues Asp-1709–Gly-1737 are compositionally biased toward polar residues. The interval Thr-1778–Asn-1882 is thioesterase (TE) domain. His-2021 serves as the catalytic For thioesterase activity.

Its pathway is mycotoxin biosynthesis. Non-reducing polyketide synthase; part of the gene cluster that mediates the biosynthesis of zearalenone (ZEA), a nonsteroid estrogen that is a contaminant of cereal grains and causes estrogenic disorders in humans and animals. The ZEA backbone is synthesized from a single acetyl-CoA molecule and eight malonyl-CoA molecules. The reducing polyketide synthase ZEA2 is proposed to synthesize a reduced hexaketide intermediate by using different combinations of its reductive domains during each round of condensation. The hexaketide thioester is then transacylated to the non-reducing polyketide synthase ZEA1 and is further condensed with three malonyl-CoAs without reductive tailoring to yield a mixed reduced/unreduced nonaketide. ZEA1 must be able to interact with ZEA2 to facilitate starter-unit acyltransfer and initiate polyketide biosynthesis. ZEA1 also mediates the required C2-C7 cyclization to form the resorcylate core and catalyzes the formation of the macrolactone. ZEA1 exhibits broad starter-unit specificities toward fatty acyl-CoAs ranging in sizes between C6 and C16 and displays the highest activity toward decanoyl-CoA. ZEB1 is then responsible for the chemical conversion of beta-zearalenonol (beta-ZOL) to ZEA in the biosynthetic pathway. The polypeptide is Non-reducing polyketide synthase ZEA1 (Gibberella zeae (strain ATCC MYA-4620 / CBS 123657 / FGSC 9075 / NRRL 31084 / PH-1) (Wheat head blight fungus)).